Consider the following 327-residue polypeptide: Phenylalanine--tRNA ligase alpha subunit (327 aa).

Glu252 contacts Mg(2+).

This sequence belongs to the class-II aminoacyl-tRNA synthetase family. Phe-tRNA synthetase alpha subunit type 1 subfamily. As to quaternary structure, tetramer of two alpha and two beta subunits. Mg(2+) serves as cofactor.

It localises to the cytoplasm. The enzyme catalyses tRNA(Phe) + L-phenylalanine + ATP = L-phenylalanyl-tRNA(Phe) + AMP + diphosphate + H(+). This Klebsiella pneumoniae subsp. pneumoniae (strain ATCC 700721 / MGH 78578) protein is Phenylalanine--tRNA ligase alpha subunit.